A 379-amino-acid polypeptide reads, in one-letter code: Succinyl-diaminopimelate desuccinylase (379 aa).

His70 contacts Zn(2+). Residue Asp72 is part of the active site. Asp103 contacts Zn(2+). The active-site Proton acceptor is Glu137. Zn(2+) contacts are provided by Glu138, Glu166, and His352.

This sequence belongs to the peptidase M20A family. DapE subfamily. In terms of assembly, homodimer. Zn(2+) is required as a cofactor. It depends on Co(2+) as a cofactor.

The enzyme catalyses N-succinyl-(2S,6S)-2,6-diaminopimelate + H2O = (2S,6S)-2,6-diaminopimelate + succinate. It functions in the pathway amino-acid biosynthesis; L-lysine biosynthesis via DAP pathway; LL-2,6-diaminopimelate from (S)-tetrahydrodipicolinate (succinylase route): step 3/3. In terms of biological role, catalyzes the hydrolysis of N-succinyl-L,L-diaminopimelic acid (SDAP), forming succinate and LL-2,6-diaminopimelate (DAP), an intermediate involved in the bacterial biosynthesis of lysine and meso-diaminopimelic acid, an essential component of bacterial cell walls. In Burkholderia cenocepacia (strain HI2424), this protein is Succinyl-diaminopimelate desuccinylase.